A 291-amino-acid polypeptide reads, in one-letter code: Transcription factor bHLH53 (291 aa).

Residues 163–212 (PTLSSQSIAARGRRRRIAEKTHELGKLIPGGNKLNTAEMFQAAAKYVKFL) enclose the bHLH domain.

Homodimer. In terms of tissue distribution, expressed constitutively in roots, leaves, stems, and flowers.

Its subcellular location is the nucleus. The protein is Transcription factor bHLH53 (BHLH53) of Arabidopsis thaliana (Mouse-ear cress).